The chain runs to 293 residues: Sodium-type flagellar protein MotY (293 aa).

The N-terminal stretch at 1–21 is a signal peptide; the sequence is MNKWLITSGVMLSLLSANSYA. In terms of domain architecture, OmpA-like spans 175-292; the sequence is YSFEDIAFTI…RVVISLGRTQ (118 aa).

It localises to the cell membrane. Functionally, may play the role of a stator in the sodium flagellar motor, stabilizing the force-generating unit through direct interaction with the cell wall. The chain is Sodium-type flagellar protein MotY from Vibrio parahaemolyticus serotype O3:K6 (strain RIMD 2210633).